Reading from the N-terminus, the 164-residue chain is V-type proton ATPase 16 kDa proteolipid subunit (164 aa).

Topologically, residues 1-9 are lumenal; sequence MSNFAGDET. A helical transmembrane segment spans residues 10–32; the sequence is APFFGFLGAAAALVFSCMGAAYG. Residues 33-54 are Cytoplasmic-facing; the sequence is TAKSGVGVASMGVMRPELVMKS. Residues 55 to 75 traverse the membrane as a helical segment; sequence IVPVVMAGVLGIYGLIIAVII. The Lumenal segment spans residues 76–94; the sequence is STGINPKTKSYYLFDGYAH. A helical transmembrane segment spans residues 95–116; sequence LSSGLACGLAGLSAGMAIGIVG. Residues 117-128 lie on the Cytoplasmic side of the membrane; sequence DAGVRANAQQPK. A helical membrane pass occupies residues 129–154; the sequence is LFVGMILILIFAEALALYGLIVGIIL. Residues 155-164 lie on the Lumenal side of the membrane; the sequence is SSRAGQSRAE.

Belongs to the V-ATPase proteolipid subunit family. As to quaternary structure, V-ATPase is a heteromultimeric enzyme composed of a peripheral catalytic V1 complex (main components: subunits A, B, C, D, E, and F) attached to an integral membrane V0 proton pore complex (main component: the proteolipid protein; which is present as a hexamer that forms the proton-conducting pore).

The protein localises to the vacuole membrane. Its function is as follows. Proton-conducting pore forming subunit of the membrane integral V0 complex of vacuolar ATPase. V-ATPase is responsible for acidifying a variety of intracellular compartments in eukaryotic cells. In Solanum lycopersicum (Tomato), this protein is V-type proton ATPase 16 kDa proteolipid subunit.